The primary structure comprises 538 residues: Bifunctional purine biosynthesis protein PurH (538 aa).

An MGS-like domain is found at 8-158; sequence IPAPDKVEIK…KNHAYVTILT (151 aa).

Belongs to the PurH family.

The enzyme catalyses (6R)-10-formyltetrahydrofolate + 5-amino-1-(5-phospho-beta-D-ribosyl)imidazole-4-carboxamide = 5-formamido-1-(5-phospho-D-ribosyl)imidazole-4-carboxamide + (6S)-5,6,7,8-tetrahydrofolate. It catalyses the reaction IMP + H2O = 5-formamido-1-(5-phospho-D-ribosyl)imidazole-4-carboxamide. It participates in purine metabolism; IMP biosynthesis via de novo pathway; 5-formamido-1-(5-phospho-D-ribosyl)imidazole-4-carboxamide from 5-amino-1-(5-phospho-D-ribosyl)imidazole-4-carboxamide (10-formyl THF route): step 1/1. It functions in the pathway purine metabolism; IMP biosynthesis via de novo pathway; IMP from 5-formamido-1-(5-phospho-D-ribosyl)imidazole-4-carboxamide: step 1/1. In Rhizobium etli (strain CIAT 652), this protein is Bifunctional purine biosynthesis protein PurH.